The following is a 363-amino-acid chain: Type-2 angiotensin II receptor (363 aa).

The Extracellular segment spans residues 1–45 (MKDNFSFAATSRNITSSRPFDNLNATGTNESAFNCSHKPSDKHLE). Asn-4, Asn-13, Asn-24, Asn-29, and Asn-34 each carry an N-linked (GlcNAc...) asparagine glycan. Intrachain disulfides connect Cys-35-Cys-290 and Cys-117-Cys-195. A helical membrane pass occupies residues 46–70 (AIPVLYYMIFVIGFAVNIVVVSLFC). The Cytoplasmic portion of the chain corresponds to 71–80 (CQKGPKKVSS). The chain crosses the membrane as a helical span at residues 81–104 (IYIFNLALADLLLLATLPLWATYY). 2 residues coordinate angiotensin II: Tyr-103 and Tyr-104. Over 105 to 114 (SYRYDWLFGP) the chain is Extracellular. The helical transmembrane segment at 115–140 (VMCKVFGSFLTLNMFASIFFITCMSV) threads the bilayer. At 141–159 (DRYQSVIYPFLSQRRNPWQ) the chain is on the cytoplasmic side. Residues 160–181 (ASYVVPLVWCMACLSSLPTFYF) form a helical membrane-spanning segment. Residues Arg-182, Tyr-204, and Lys-215 each contribute to the angiotensin II site. The Extracellular segment spans residues 182–206 (RDVRTIEYLGVNACIMAFPPEKYAQ). The chain crosses the membrane as a helical span at residues 207–232 (WSAGIALMKNILGFIIPLIFIATCYF). At 233 to 257 (GIRKHLLKTNSYGKNRITRDQVLKM) the chain is on the cytoplasmic side. Residues 258–281 (AAAVVLAFIICWLPFHVLTFLDAL) form a helical membrane-spanning segment. Angiotensin II is bound at residue Asp-279. Over 282-294 (TWMGIINSCEVIA) the chain is Extracellular. A helical membrane pass occupies residues 295–320 (VIDLALPFAILLGFTNSCVNPFLYCF). Asp-297 lines the angiotensin II pocket. Over 321–363 (VGNRFQQKLRSVFRVPITWLQGKRETMSCRKGSSLREMDTFVS) the chain is Cytoplasmic. The tract at residues 324 to 333 (RFQQKLRSVF) is helix VIII. Ser-354 is modified (phosphoserine; by PKC).

Belongs to the G-protein coupled receptor 1 family. In terms of assembly, interacts with MTUS1. In terms of tissue distribution, expressed at highest levels in adrenal gland and uterus.

It localises to the cell membrane. Receptor for angiotensin II, a vasoconstricting peptide. Signals primarily via a non-canonical G-protein- and beta-arrestin independent pathways. Cooperates with MTUS1 to inhibit ERK2 activation and cell proliferation. In Mus musculus (Mouse), this protein is Type-2 angiotensin II receptor.